The sequence spans 955 residues: Glycine dehydrogenase (decarboxylating) (955 aa).

K702 carries the N6-(pyridoxal phosphate)lysine modification.

This sequence belongs to the GcvP family. As to quaternary structure, the glycine cleavage system is composed of four proteins: P, T, L and H. The cofactor is pyridoxal 5'-phosphate.

It catalyses the reaction N(6)-[(R)-lipoyl]-L-lysyl-[glycine-cleavage complex H protein] + glycine + H(+) = N(6)-[(R)-S(8)-aminomethyldihydrolipoyl]-L-lysyl-[glycine-cleavage complex H protein] + CO2. In terms of biological role, the glycine cleavage system catalyzes the degradation of glycine. The P protein binds the alpha-amino group of glycine through its pyridoxal phosphate cofactor; CO(2) is released and the remaining methylamine moiety is then transferred to the lipoamide cofactor of the H protein. This is Glycine dehydrogenase (decarboxylating) from Bordetella avium (strain 197N).